Reading from the N-terminus, the 662-residue chain is U6 snRNA-specific terminal uridylyltransferase (662 aa).

Mg(2+) contacts are provided by Asp-183 and Asp-185. In terms of domain architecture, PAP-associated spans 384 to 437 (CKFFRELFKYYANFDFTNKAIYGKKAMQKKTLSSAHGGVEESPLMLMDPMDITH).

Belongs to the DNA polymerase type-B-like family. As to quaternary structure, forms a complex composed of sart-3, terminal uridylyltransferase usip-1 and U6 snRNA; complex formation is mediated by usip-1 and sart-3 binding to U6 snRNA. It depends on Mg(2+) as a cofactor. Mn(2+) is required as a cofactor. In terms of tissue distribution, ubiquitously expressed.

It localises to the nucleus. It is found in the nucleoplasm. The catalysed reaction is RNA(n) + UTP = RNA(n)-3'-uridine ribonucleotide + diphosphate. Functionally, acts as a specific terminal uridylyltransferase for U6 snRNA. Responsible for the addition of UTP at the 3' end of U6 snRNA which stabilizes U6 snRNA. Does not have activity towards modified uridine containing 3'-monophosphorylation or 2'-O-methylation. The protein is U6 snRNA-specific terminal uridylyltransferase of Caenorhabditis elegans.